We begin with the raw amino-acid sequence, 264 residues long: Thymidylate synthase (264 aa).

Arg21 contributes to the dUMP binding site. His51 contacts (6R)-5,10-methylene-5,6,7,8-tetrahydrofolate. 126–127 (RR) provides a ligand contact to dUMP. The active-site Nucleophile is the Cys146. DUMP contacts are provided by residues 166 to 169 (RSCD), Asn177, and 207 to 209 (HLY). Asp169 contributes to the (6R)-5,10-methylene-5,6,7,8-tetrahydrofolate binding site. Residue Ser263 coordinates (6R)-5,10-methylene-5,6,7,8-tetrahydrofolate.

The protein belongs to the thymidylate synthase family. Bacterial-type ThyA subfamily. As to quaternary structure, homodimer.

It is found in the cytoplasm. It carries out the reaction dUMP + (6R)-5,10-methylene-5,6,7,8-tetrahydrofolate = 7,8-dihydrofolate + dTMP. Its pathway is pyrimidine metabolism; dTTP biosynthesis. In terms of biological role, catalyzes the reductive methylation of 2'-deoxyuridine-5'-monophosphate (dUMP) to 2'-deoxythymidine-5'-monophosphate (dTMP) while utilizing 5,10-methylenetetrahydrofolate (mTHF) as the methyl donor and reductant in the reaction, yielding dihydrofolate (DHF) as a by-product. This enzymatic reaction provides an intracellular de novo source of dTMP, an essential precursor for DNA biosynthesis. The chain is Thymidylate synthase from Buchnera aphidicola subsp. Acyrthosiphon pisum (strain APS) (Acyrthosiphon pisum symbiotic bacterium).